The chain runs to 84 residues: MNYFILLFVATFLLLDVNCKKDGYPVDANNCKFECWKNEYCDELCKAKRAESGYCYKLKLSCWCEGLPDDEPTKTSDRCYGTGR.

Positions 1-19 (MNYFILLFVATFLLLDVNC) are cleaved as a signal peptide. The region spanning 21–80 (KDGYPVDANNCKFECWKNEYCDELCKAKRAESGYCYKLKLSCWCEGLPDDEPTKTSDRCY) is the LCN-type CS-alpha/beta domain. 4 disulfide bridges follow: C31/C79, C35/C55, C41/C62, and C45/C64. At T82 the chain carries Threonine amide.

This sequence belongs to the long (4 C-C) scorpion toxin superfamily. Sodium channel inhibitor family. Alpha subfamily. Expressed by the venom gland.

The protein localises to the secreted. Functionally, alpha toxins bind voltage-independently at site-3 of sodium channels (Nav) and inhibit the inactivation of the activated channels, thereby blocking neuronal transmission. Is possibly toxic to mice. This Centruroides tecomanus (Scorpion) protein is Beta-toxin Ct16.